The sequence spans 558 residues: Protein shisa-7 (558 aa).

The signal sequence occupies residues 1 to 22 (MPALLLLGTVALLASAAGPAGA). Topologically, residues 23-189 (RPSNDTSSVA…GGEGPGGSTA (167 aa)) are extracellular. A glycan (N-linked (GlcNAc...) asparagine) is linked at N26. 2 disordered regions span residues 53-79 (GGSA…ARAP) and 142-181 (TPPP…GRGG). A compositionally biased stretch (low complexity) spans 57-77 (AGTSANATKTSPASGTGAAAR). A compositionally biased stretch (gly residues) spans 148 to 181 (GGAGGAGGAGGGPGPGQAGWLEGGRAGGAGGRGG). Residues 154–175 (GGAGGGPGPGQAGWLEGGRAGG) are GRID. A helical transmembrane segment spans residues 190-210 (YVVCGVISFALAVGVGAKVAF). Residues 211–558 (SKASRAPRAH…RTASKNEVTV (348 aa)) lie on the Cytoplasmic side of the membrane. Residues 236–263 (QAGPATRPDRARSSSLTPGLGGPDSMAP) are disordered. A Phosphoserine modification is found at S438. Residues 443 to 506 (RQSREHLLSP…HHHHALHGSP (64 aa)) form a disordered region. Residues 453–462 (PRSPALPPDP) show a composition bias toward pro residues. Residues 466–477 (ASLAASHSNLLL) show a composition bias toward low complexity. T532 bears the Phosphothreonine mark. The PDZ-binding signature appears at 555-558 (EVTV).

It belongs to the shisa family. Interacts with GABA(A)R (GABA type A receptor) subunits GABRA1, GABRA2 and GABRG2; the interaction is direct. Does not interact with GABRB2 and GABRB3 subunits. Interacts with AMPAR subunits GRIA1, GRIA2 and GRIA3 and AMPAR auxiliary proteins SHISA6 and SHISA7 in heterologous cells. Interacts (via PDZ-binding motif) with DLG4/PSD-95 (via PDZ domain)in heterologous cells; the interaction is direct. Post-translationally, N-glycosylated. Mainly expressed in neurons. Highly expressed in brain structures including cortex, striatum, olfactory bulb, amygdala hippocampus CA1-3 and dentate gyrus (at protein level).

Its subcellular location is the postsynaptic density membrane. In terms of biological role, transmembrane protein that regulates gamma-aminobutyric acid type A receptor (GABA(A)R) trafficking, channel deactivation kinetics and pharmacology, necessary for fast inhibitory transmission in the brain. Enhances the action of benzodiazepine, a primary GABA(A)Rs target drug, in the brain. May affect channel kinetics of AMPA-type glutamate receptors (AMPAR), the brain's main excitatory neurotransmitter, necessary for synaptic hippocampal plasticity, and memory recall. May regulate the induction and maintenance of long-term potentiation at Schaffer collaterals/CA3-CA1 excitatory synapses. This is Protein shisa-7 from Mus musculus (Mouse).